We begin with the raw amino-acid sequence, 199 residues long: Ribosome biogenesis protein RLP24 (199 aa).

Residues 147 to 182 (KEQERAESVSEQEESEEEEEDMEIDSDEEEEEQLEK) form a disordered region. A compositionally biased stretch (acidic residues) spans 156-179 (SEQEESEEEEEDMEIDSDEEEEEQ). Phosphoserine is present on serine 172.

It belongs to the eukaryotic ribosomal protein eL24 family. In terms of assembly, associated with nucleolar and cytoplasmic pre-60S particles. At the end of biogenesis it dissociates from cytoplasmic pre-60S particles and is likely to be exchanged for its ribosomal homolog, RPL24. Interacts (via C-terminus) with AFG2 (hexameric form); the interaction is direct, recruits AFG2 to pre-60S ribosomal particles and promotes AFG2 ATPase activity and RLP24 release from pre-60S ribosomal particles. Interacts with NOG1; the interaction is direct.

Its subcellular location is the cytoplasm. The protein resides in the nucleus. In terms of biological role, involved in the biogenesis of the 60S ribosomal subunit. Ensures the docking of NOG1 to pre-60S ribosomal particles. Activates and recruits ATPase AFG2 to cytoplasmic pre-60S ribosomal particles. In Saccharomyces cerevisiae (strain ATCC 204508 / S288c) (Baker's yeast), this protein is Ribosome biogenesis protein RLP24 (RLP24).